Consider the following 227-residue polypeptide: Peptidyl-tRNA hydrolase (227 aa).

A tRNA-binding site is contributed by tyrosine 14. The active-site Proton acceptor is the histidine 19. Residues phenylalanine 64, asparagine 66, and asparagine 112 each contribute to the tRNA site. The segment at arginine 182–glycine 227 is disordered. Over residues proline 198–threonine 215 the composition is skewed to basic and acidic residues.

Belongs to the PTH family. As to quaternary structure, monomer.

The protein localises to the cytoplasm. It catalyses the reaction an N-acyl-L-alpha-aminoacyl-tRNA + H2O = an N-acyl-L-amino acid + a tRNA + H(+). Its function is as follows. Hydrolyzes ribosome-free peptidyl-tRNAs (with 1 or more amino acids incorporated), which drop off the ribosome during protein synthesis, or as a result of ribosome stalling. Functionally, catalyzes the release of premature peptidyl moieties from peptidyl-tRNA molecules trapped in stalled 50S ribosomal subunits, and thus maintains levels of free tRNAs and 50S ribosomes. This chain is Peptidyl-tRNA hydrolase, found in Rhodospirillum centenum (strain ATCC 51521 / SW).